Consider the following 479-residue polypeptide: Proline--tRNA ligase (479 aa).

The protein belongs to the class-II aminoacyl-tRNA synthetase family. ProS type 3 subfamily. In terms of assembly, homodimer.

It localises to the cytoplasm. It catalyses the reaction tRNA(Pro) + L-proline + ATP = L-prolyl-tRNA(Pro) + AMP + diphosphate. Its function is as follows. Catalyzes the attachment of proline to tRNA(Pro) in a two-step reaction: proline is first activated by ATP to form Pro-AMP and then transferred to the acceptor end of tRNA(Pro). The polypeptide is Proline--tRNA ligase (Mesomycoplasma hyopneumoniae (strain 7448) (Mycoplasma hyopneumoniae)).